Reading from the N-terminus, the 178-residue chain is Large ribosomal subunit protein uL6 (178 aa).

The protein belongs to the universal ribosomal protein uL6 family. As to quaternary structure, part of the 50S ribosomal subunit.

Its function is as follows. This protein binds to the 23S rRNA, and is important in its secondary structure. It is located near the subunit interface in the base of the L7/L12 stalk, and near the tRNA binding site of the peptidyltransferase center. This is Large ribosomal subunit protein uL6 from Halalkalibacterium halodurans (strain ATCC BAA-125 / DSM 18197 / FERM 7344 / JCM 9153 / C-125) (Bacillus halodurans).